A 209-amino-acid polypeptide reads, in one-letter code: Probable nicotinate-nucleotide adenylyltransferase (209 aa).

The protein belongs to the NadD family.

It catalyses the reaction nicotinate beta-D-ribonucleotide + ATP + H(+) = deamido-NAD(+) + diphosphate. It functions in the pathway cofactor biosynthesis; NAD(+) biosynthesis; deamido-NAD(+) from nicotinate D-ribonucleotide: step 1/1. Functionally, catalyzes the reversible adenylation of nicotinate mononucleotide (NaMN) to nicotinic acid adenine dinucleotide (NaAD). In Idiomarina loihiensis (strain ATCC BAA-735 / DSM 15497 / L2-TR), this protein is Probable nicotinate-nucleotide adenylyltransferase.